The primary structure comprises 189 residues: UPF0301 protein PA14_05290 (189 aa).

This sequence belongs to the UPF0301 (AlgH) family.

This is UPF0301 protein PA14_05290 from Pseudomonas aeruginosa (strain UCBPP-PA14).